We begin with the raw amino-acid sequence, 376 residues long: Glucose-1-phosphate adenylyltransferase (376 aa).

Alpha-D-glucose 1-phosphate-binding positions include Y101, G166, 181-182 (EK), and S192.

The protein belongs to the bacterial/plant glucose-1-phosphate adenylyltransferase family. As to quaternary structure, homotetramer.

The catalysed reaction is alpha-D-glucose 1-phosphate + ATP + H(+) = ADP-alpha-D-glucose + diphosphate. It functions in the pathway glycan biosynthesis; glycogen biosynthesis. Its function is as follows. Involved in the biosynthesis of ADP-glucose, a building block required for the elongation reactions to produce glycogen. Catalyzes the reaction between ATP and alpha-D-glucose 1-phosphate (G1P) to produce pyrophosphate and ADP-Glc. The polypeptide is Glucose-1-phosphate adenylyltransferase (Bacillus cereus (strain ATCC 10987 / NRS 248)).